Consider the following 390-residue polypeptide: Probable splicing factor YJU2B (390 aa).

Residues 354-390 form a disordered region; it reads DACKASSSSEEENSIDSCATGKSLVADYSDSDSGSEV.

This sequence belongs to the CWC16 family.

It is found in the nucleus. Its function is as follows. May be involved in mRNA splicing. This is Probable splicing factor YJU2B (yju2b) from Danio rerio (Zebrafish).